A 264-amino-acid polypeptide reads, in one-letter code: Thiazole synthase (264 aa).

Lysine 106 functions as the Schiff-base intermediate with DXP in the catalytic mechanism. Residues glycine 167, 193-194, and 215-216 each bind 1-deoxy-D-xylulose 5-phosphate; these read AG and NT.

This sequence belongs to the ThiG family. As to quaternary structure, homotetramer. Forms heterodimers with either ThiH or ThiS.

The protein resides in the cytoplasm. It catalyses the reaction [ThiS sulfur-carrier protein]-C-terminal-Gly-aminoethanethioate + 2-iminoacetate + 1-deoxy-D-xylulose 5-phosphate = [ThiS sulfur-carrier protein]-C-terminal Gly-Gly + 2-[(2R,5Z)-2-carboxy-4-methylthiazol-5(2H)-ylidene]ethyl phosphate + 2 H2O + H(+). Its pathway is cofactor biosynthesis; thiamine diphosphate biosynthesis. Functionally, catalyzes the rearrangement of 1-deoxy-D-xylulose 5-phosphate (DXP) to produce the thiazole phosphate moiety of thiamine. Sulfur is provided by the thiocarboxylate moiety of the carrier protein ThiS. In vitro, sulfur can be provided by H(2)S. The polypeptide is Thiazole synthase (Xylella fastidiosa (strain 9a5c)).